The following is a 351-amino-acid chain: Photosystem II D2 protein (351 aa).

The chain crosses the membrane as a helical span at residues 39–59 (TSYLSIGGWFTGTTFVTSWYT). Position 116 (His116) interacts with chlorophyll a. A helical membrane pass occupies residues 123-139 (GFCLRQFEIARLVGIRP). Residues Gln128 and Asn141 each coordinate pheophytin a. The helical transmembrane segment at 151–164 (IFVSVFLMYPLGQA) threads the bilayer. Residue His196 participates in chlorophyll a binding. A helical transmembrane segment spans residues 206–226 (AALLCAIHGATVQNTIFEDGD). The a plastoquinone site is built by His213 and Phe260. His213 provides a ligand contact to Fe cation. His267 lines the Fe cation pocket. A helical transmembrane segment spans residues 277 to 293 (GLWTSAIGIVGLALNLR).

Belongs to the reaction center PufL/M/PsbA/D family. PSII is composed of 1 copy each of membrane proteins PsbA, PsbB, PsbC, PsbD, PsbE, PsbF, PsbH, PsbI, PsbJ, PsbK, PsbL, PsbM, PsbT, PsbX, PsbY, PsbZ, Psb30/Ycf12, at least 3 peripheral proteins of the oxygen-evolving complex and a large number of cofactors. It forms dimeric complexes. The D1/D2 heterodimer binds P680, chlorophylls that are the primary electron donor of PSII, and subsequent electron acceptors. It shares a non-heme iron and each subunit binds pheophytin, quinone, additional chlorophylls, carotenoids and lipids. There is also a Cl(-1) ion associated with D1 and D2, which is required for oxygen evolution. The PSII complex binds additional chlorophylls, carotenoids and specific lipids. is required as a cofactor.

The protein resides in the plastid. Its subcellular location is the chloroplast thylakoid membrane. The enzyme catalyses 2 a plastoquinone + 4 hnu + 2 H2O = 2 a plastoquinol + O2. Photosystem II (PSII) is a light-driven water:plastoquinone oxidoreductase that uses light energy to abstract electrons from H(2)O, generating O(2) and a proton gradient subsequently used for ATP formation. It consists of a core antenna complex that captures photons, and an electron transfer chain that converts photonic excitation into a charge separation. The D1/D2 (PsbA/PsbD) reaction center heterodimer binds P680, the primary electron donor of PSII as well as several subsequent electron acceptors. D2 is needed for assembly of a stable PSII complex. The sequence is that of Photosystem II D2 protein from Guillardia theta (Cryptophyte).